The primary structure comprises 243 residues: Zinc import ATP-binding protein ZnuC 2 (243 aa).

The 216-residue stretch at 3–218 (LSLHQLSVKF…PEYKVLFGLD (216 aa)) folds into the ABC transporter domain. Residue 35 to 42 (GPNGSGKS) participates in ATP binding.

Belongs to the ABC transporter superfamily. Zinc importer (TC 3.A.1.15.5) family. As to quaternary structure, the complex is composed of two ATP-binding proteins (ZnuC), two transmembrane proteins (ZnuB) and a solute-binding protein (ZnuA).

It is found in the cell inner membrane. It carries out the reaction Zn(2+)(out) + ATP(in) + H2O(in) = Zn(2+)(in) + ADP(in) + phosphate(in) + H(+)(in). Part of the ABC transporter complex ZnuABC involved in zinc import. Responsible for energy coupling to the transport system. The chain is Zinc import ATP-binding protein ZnuC 2 from Aliivibrio fischeri (strain ATCC 700601 / ES114) (Vibrio fischeri).